A 228-amino-acid chain; its full sequence is 3-dehydroquinate dehydratase (228 aa).

3-dehydroquinate contacts are provided by residues 30–32 and Arg62; that span reads EWR. Catalysis depends on His118, which acts as the Proton donor/acceptor. The active-site Schiff-base intermediate with substrate is the Lys143. The 3-dehydroquinate site is built by Arg186, Ser205, and Gln209.

It belongs to the type-I 3-dehydroquinase family. As to quaternary structure, homodimer.

It carries out the reaction 3-dehydroquinate = 3-dehydroshikimate + H2O. Its pathway is metabolic intermediate biosynthesis; chorismate biosynthesis; chorismate from D-erythrose 4-phosphate and phosphoenolpyruvate: step 3/7. Its function is as follows. Involved in the third step of the chorismate pathway, which leads to the biosynthesis of aromatic amino acids. Catalyzes the cis-dehydration of 3-dehydroquinate (DHQ) and introduces the first double bond of the aromatic ring to yield 3-dehydroshikimate. This chain is 3-dehydroquinate dehydratase, found in Streptococcus pyogenes serotype M12 (strain MGAS9429).